Here is an 88-residue protein sequence, read N- to C-terminus: Small ribosomal subunit protein uS17 (88 aa).

It belongs to the universal ribosomal protein uS17 family. Part of the 30S ribosomal subunit.

Its function is as follows. One of the primary rRNA binding proteins, it binds specifically to the 5'-end of 16S ribosomal RNA. This chain is Small ribosomal subunit protein uS17, found in Mycoplasmopsis agalactiae (strain NCTC 10123 / CIP 59.7 / PG2) (Mycoplasma agalactiae).